The following is a 977-amino-acid chain: Kinesin-like protein KIN-14D (977 aa).

Residues 1–13 (MSSSNNAAAAAAS) show a composition bias toward low complexity. A disordered region spans residues 1–20 (MSSSNNAAAAAASPDPSRRR). The Calponin-homology (CH) domain maps to 17-118 (SRRREDVVGW…CILALKDRFG (102 aa)). A coiled-coil region spans residues 297–384 (KAEETQRIED…TKRRIELEEL (88 aa)). In terms of domain architecture, Kinesin motor spans 472–800 (NIRVYCRIRP…LKFAERVSGV (329 aa)). An ATP-binding site is contributed by 556–563 (GQTGSGKT). A coiled-coil region spans residues 812 to 847 (KEGKDVKELMDQLSLLKDTISKKDEEIDRLQLLNSS). The disordered stretch occupies residues 852–977 (PTRQADSVLK…RNNSTLKRGP (126 aa)). 2 stretches are compositionally biased toward polar residues: residues 861 to 879 (KHSS…TSVG) and 956 to 977 (RKSS…KRGP).

This sequence belongs to the TRAFAC class myosin-kinesin ATPase superfamily. Kinesin family. KIN-14 subfamily.

The protein is Kinesin-like protein KIN-14D of Oryza sativa subsp. japonica (Rice).